The following is a 420-amino-acid chain: Glucose-1-phosphate adenylyltransferase (420 aa).

Alpha-D-glucose 1-phosphate contacts are provided by residues tyrosine 107, glycine 172, 187-188 (EK), and serine 205.

This sequence belongs to the bacterial/plant glucose-1-phosphate adenylyltransferase family. As to quaternary structure, homotetramer.

The catalysed reaction is alpha-D-glucose 1-phosphate + ATP + H(+) = ADP-alpha-D-glucose + diphosphate. Its pathway is glycan biosynthesis; glycogen biosynthesis. Its function is as follows. Involved in the biosynthesis of ADP-glucose, a building block required for the elongation reactions to produce glycogen. Catalyzes the reaction between ATP and alpha-D-glucose 1-phosphate (G1P) to produce pyrophosphate and ADP-Glc. This Sinorhizobium fredii (strain NBRC 101917 / NGR234) protein is Glucose-1-phosphate adenylyltransferase.